The following is a 165-amino-acid chain: UBA-like domain-containing protein 2-B (165 aa).

Residues 119–165 are disordered; sequence QQPVWLPPASPTAHLHHHHHHPQPVWPPNSQPTGGPQKAMAAMDGQR.

It belongs to the UBALD family.

The chain is UBA-like domain-containing protein 2-B (ubald2-b) from Xenopus laevis (African clawed frog).